A 468-amino-acid chain; its full sequence is Protein C-ets-2 (468 aa).

Positions 85 to 170 constitute a PNT domain; it reads ATFSGFQKEQ…EHLEQMIKEN (86 aa). Phosphoserine is present on residues Ser-220 and Ser-225. The segment at 262 to 290 is disordered; that stretch reads VNLLNNNSGKPKDHDSPENGGDSFESSDS. Ser-294, Ser-297, and Ser-300 each carry phosphoserine. The segment at residues 362-442 is a DNA-binding region (ETS); the sequence is IQLWQFLLEL…SGKRYVYRFV (81 aa).

This sequence belongs to the ETS family. Phosphorylation by CDK10 at Ser-220 and Ser-225 creates a phosphodegron that targets ETS2 for proteasomal degradation.

It is found in the nucleus. Functionally, transcription factor activating transcription. Binds specifically the GGA DNA motif in gene promoters and stimulates transcription of those genes. The protein is Protein C-ets-2 (Ets2) of Mus musculus (Mouse).